A 119-amino-acid chain; its full sequence is uncharacterized protein (119 aa).

The interval 78 to 119 (SHRKSQQHQTQGNQVLRGTRKLESPTVGPRPGLRRQHTRNFL) is disordered. Positions 84–93 (QHQTQGNQVL) are enriched in polar residues. The span at 109–119 (GLRRQHTRNFL) shows a compositional bias: basic residues.

This is an uncharacterized protein from Saccharomyces cerevisiae (strain ATCC 204508 / S288c) (Baker's yeast).